Consider the following 446-residue polypeptide: GTPase Der (446 aa).

EngA-type G domains follow at residues 2–166 (TVVA…PEAP) and 179–354 (IRVS…RQYN). Residues 8 to 15 (GRPNVGKS), 55 to 59 (DTAGF), 118 to 121 (NKID), 185 to 192 (GRPNVGKS), 232 to 236 (DTAGI), and 297 to 300 (NKWD) each bind GTP. A KH-like domain is found at 355-440 (QRVTTGIVNR…PIRLIFRPRQ (86 aa)).

Belongs to the TRAFAC class TrmE-Era-EngA-EngB-Septin-like GTPase superfamily. EngA (Der) GTPase family. Associates with the 50S ribosomal subunit.

Functionally, GTPase that plays an essential role in the late steps of ribosome biogenesis. This Syntrophobacter fumaroxidans (strain DSM 10017 / MPOB) protein is GTPase Der.